Reading from the N-terminus, the 91-residue chain is Small ribosomal subunit protein bS16 (91 aa).

It belongs to the bacterial ribosomal protein bS16 family.

This Lacticaseibacillus casei (strain BL23) (Lactobacillus casei) protein is Small ribosomal subunit protein bS16.